Consider the following 220-residue polypeptide: Adapter protein MecA (220 aa).

The protein belongs to the MecA family. Homodimer.

Functionally, enables the recognition and targeting of unfolded and aggregated proteins to the ClpC protease or to other proteins involved in proteolysis. The polypeptide is Adapter protein MecA (Macrococcus caseolyticus (strain JCSC5402) (Macrococcoides caseolyticum)).